The following is a 243-amino-acid chain: 3-deoxy-manno-octulosonate cytidylyltransferase (243 aa).

It belongs to the KdsB family.

The protein resides in the cytoplasm. The enzyme catalyses 3-deoxy-alpha-D-manno-oct-2-ulosonate + CTP = CMP-3-deoxy-beta-D-manno-octulosonate + diphosphate. It participates in nucleotide-sugar biosynthesis; CMP-3-deoxy-D-manno-octulosonate biosynthesis; CMP-3-deoxy-D-manno-octulosonate from 3-deoxy-D-manno-octulosonate and CTP: step 1/1. It functions in the pathway bacterial outer membrane biogenesis; lipopolysaccharide biosynthesis. Activates KDO (a required 8-carbon sugar) for incorporation into bacterial lipopolysaccharide in Gram-negative bacteria. This Helicobacter acinonychis (strain Sheeba) protein is 3-deoxy-manno-octulosonate cytidylyltransferase.